The following is a 432-amino-acid chain: Phytase AppA (432 aa).

Positions 1-22 (MKAILIPFLSLLIPLTPQSAFA) are cleaved as a signal peptide. Arg-38 is a 1D-myo-inositol hexakisphosphate binding site. The active-site Nucleophile is the His-39. Residues 42–46 (RAPTK) and Arg-114 contribute to the 1D-myo-inositol hexakisphosphate site. Disulfide bonds link Cys-99–Cys-130, Cys-155–Cys-430, Cys-200–Cys-210, and Cys-404–Cys-413. Residues Arg-289 and 325–327 (HDT) contribute to the 1D-myo-inositol hexakisphosphate site. Asp-326 acts as the Proton donor in catalysis.

The protein belongs to the histidine acid phosphatase family. In terms of assembly, monomer.

The protein localises to the periplasm. It carries out the reaction 1D-myo-inositol hexakisphosphate + H2O = 1D-myo-inositol 1,2,3,4,5-pentakisphosphate + phosphate. It catalyses the reaction 1D-myo-inositol 1,2,3,4,5-pentakisphosphate + H2O = 1D-myo-inositol 2,3,4,5-tetrakisphosphate + phosphate. The catalysed reaction is 1D-myo-inositol 2,3,4,5-tetrakisphosphate + H2O = 1D-myo-inositol 2,4,5-triphosphate + phosphate. The enzyme catalyses 1D-myo-inositol 2,4,5-triphosphate + H2O = 1D-myo-inositol 2,5-bisphosphate + phosphate. It carries out the reaction 1D-myo-inositol 2,5-bisphosphate + H2O = 1D-myo-inositol 2-phosphate + phosphate. It catalyses the reaction GTP + H2O = GDP + phosphate + H(+). With respect to regulation, contains three consecutive and one non-consecutive disulfide bonds and shows a strong dependence on DsbC for its full activity. Competitively inhibited by tartaric acid and by sodium fluorid. Functionally, catalyzes the hydrolysis of phytate (or myo-inositol hexakisphosphate, an indigestible organic form of phosphorus that is found in many plant tissues) to myo-inositol and inorganic phosphate. Dephosphorylates phytate in a stereospecific way by sequential removal of phosphate groups to produce myo-inositol 2-monophosphate. Also shows phosphoanhydride phosphatase activity and hydrolyzes the distal phosphoryl residues of GTP, the 5'-beta-phosphoryl residue of the regulatory nucleotide ppGpp and tripolyphosphates. Does not split most phosphomonoesters with the exception of the synthetic substrate p-nitrophenyl phosphate (pNPP), 2,3-bisphosphoglycerate and fructose 1,6-bisphosphate. This Escherichia coli (strain K12) protein is Phytase AppA.